Reading from the N-terminus, the 427-residue chain is Piwi protein (427 aa).

The segment at 38–167 (PYEVPSLKYN…VQFVSKLGGK (130 aa)) is mid domain. The Piwi domain maps to 110–406 (GIMLVLPEYN…VAGIIANVNR (297 aa)). The interval 118 to 124 (YNTPLYY) is binds 5'-phosphorylated end of guide DNA. Positions 147-148 (RN) are binds target DNA. The interval 150–155 (TFYVDN) is binds guide DNA. A divalent metal cation is bound by residues glutamine 159 and leucine 427. The PIWI domain stretch occupies residues 168 to 427 (PWILNVDPEK…RSLQTNPWFL (260 aa)).

Belongs to the argonaute family. Short pAgo subfamily. Homodimer probably stabilized by DNA. Each subunit is capable of interacting with a DNA molecule. The cofactor is a divalent metal cation.

Functionally, might play a role in defense against invading genetic elements, using short nucleic acid sequences as guides to bind complementary target strands, resulting in slicing of the target nucleic acid. Binds nucleic acids with decreasing affinity in the following order; ssDNA, ssRNA, dsDNA, RNA-DNA, RNA-RNA. Association of the 5' seed region of the guide strand (nucleotides 2-7) with AfPiwi increases affinity for the corresponding target strand; the greatest increase in affinity is for guide DNA with target RNA. The sequence is that of Piwi protein from Archaeoglobus fulgidus (strain ATCC 49558 / DSM 4304 / JCM 9628 / NBRC 100126 / VC-16).